A 325-amino-acid polypeptide reads, in one-letter code: Elongation factor P--(R)-beta-lysine ligase (325 aa).

76–78 lines the substrate pocket; it reads SPE. Residues 100–102 and Asn-109 contribute to the ATP site; that span reads RNE. Position 118 (Tyr-118) interacts with substrate. 244-245 lines the ATP pocket; that stretch reads EL. Glu-251 serves as a coordination point for substrate. Gly-300 provides a ligand contact to ATP.

The protein belongs to the class-II aminoacyl-tRNA synthetase family. EpmA subfamily. In terms of assembly, homodimer.

It catalyses the reaction D-beta-lysine + L-lysyl-[protein] + ATP = N(6)-((3R)-3,6-diaminohexanoyl)-L-lysyl-[protein] + AMP + diphosphate + H(+). Functionally, with EpmB is involved in the beta-lysylation step of the post-translational modification of translation elongation factor P (EF-P) on 'Lys-34'. Catalyzes the ATP-dependent activation of (R)-beta-lysine produced by EpmB, forming a lysyl-adenylate, from which the beta-lysyl moiety is then transferred to the epsilon-amino group of EF-P 'Lys-34'. This is Elongation factor P--(R)-beta-lysine ligase from Salmonella dublin (strain CT_02021853).